Consider the following 495-residue polypeptide: Transcription termination/antitermination protein NusA (495 aa).

The 66-residue stretch at 135–200 (GEIITGVVKK…RGAQLFVTRS (66 aa)) folds into the S1 motif domain. The region spanning 302 to 368 (KHTMDIAVEA…FTKYLDIDED (67 aa)) is the KH domain. 2 consecutive repeat copies span residues 364–414 (DIDE…KNAL) and 439–489 (GVDR…RNIC). Positions 364-489 (DIDEDFATVL…ALIMAARNIC (126 aa)) are 2 X 51 AA approximate repeats.

This sequence belongs to the NusA family. As to quaternary structure, monomer. Binds directly to the core enzyme of the DNA-dependent RNA polymerase and to nascent RNA.

Its subcellular location is the cytoplasm. Functionally, participates in both transcription termination and antitermination. This chain is Transcription termination/antitermination protein NusA, found in Shigella flexneri.